The chain runs to 174 residues: Ribulose bisphosphate carboxylase small subunit, chloroplastic (174 aa).

Residues 1–45 constitute a chloroplast transit peptide; that stretch reads MAPTVMASSATSVAPFQGLKSTAGLPVSRRSNASSASVSNGGRIR.

The protein belongs to the RuBisCO small chain family. As to quaternary structure, heterohexadecamer of 8 large and 8 small subunits.

The protein localises to the plastid. It is found in the chloroplast. RuBisCO catalyzes two reactions: the carboxylation of D-ribulose 1,5-bisphosphate, the primary event in carbon dioxide fixation, as well as the oxidative fragmentation of the pentose substrate. Both reactions occur simultaneously and in competition at the same active site. Although the small subunit is not catalytic it is essential for maximal activity. The chain is Ribulose bisphosphate carboxylase small subunit, chloroplastic from Hordeum vulgare (Barley).